Consider the following 1066-residue polypeptide: Glucose transport transcription regulator RGT1 (1066 aa).

2 stretches are compositionally biased toward polar residues: residues 1 to 11 and 42 to 57; these read MTPMSENNGSE and VESQSSQGASGGNTSA. 6 disordered regions span residues 1–70, 108–153, 214–285, 298–399, 616–645, and 849–871; these read MTPM…ACDQ, PSKG…VLLP, YASP…QQQY, GANG…EYPL, DATKSGSNDNDNTNNDNNSNNANNDNNDSR, and MEHDDSGNSASRKFTTSQAESGK. Positions 68-97 form a DNA-binding region, zn(2)-C6 fungal-type; it reads CDQCRKRKIRCDYDDDKGVCTSCRKNGESC. Polar residues-rich tracts occupy residues 118–131, 139–148, 260–270, and 314–327; these read VSRSISGENNNTAA, EFSSPSSRQG, GSNPPSLKNVS, and MSPSASVPYQSVPM. Composition is skewed to low complexity over residues 328-350 and 622-641; these read NQSNSNGLSQQQQQPIQWPKVQP and SNDNDNTNNDNNSNNANNDN. The span at 855–871 shows a compositional bias: polar residues; the sequence is GNSASRKFTTSQAESGK.

It belongs to the EDS1/RGT1 family.

The protein localises to the nucleus. Its subcellular location is the cytoplasm. Its function is as follows. Glucose-responsive transcription factor that regulates expression of several glucose transporter (HXT) genes in response to glucose. In the absence of glucose, it functions as a transcriptional repressor, whereas high concentrations of glucose cause it to function as a transcriptional activator. In cells growing on low levels of glucose, has a neutral role, neither repressing nor activating transcription. The sequence is that of Glucose transport transcription regulator RGT1 (RGT1) from Zygosaccharomyces rouxii (strain ATCC 2623 / CBS 732 / NBRC 1130 / NCYC 568 / NRRL Y-229).